Consider the following 123-residue polypeptide: Small ribosomal subunit protein uS12cz/uS12cy (123 aa).

Belongs to the universal ribosomal protein uS12 family. Part of the 30S ribosomal subunit.

Its subcellular location is the plastid. It localises to the chloroplast. Its function is as follows. With S4 and S5 plays an important role in translational accuracy. Located at the interface of the 30S and 50S subunits. This is Small ribosomal subunit protein uS12cz/uS12cy (rps12-A) from Nymphaea alba (White water-lily).